Consider the following 275-residue polypeptide: Voltage-dependent calcium channel gamma-5 subunit (275 aa).

4 helical membrane-spanning segments follow: residues 8 to 28 (ALTL…GIAV), 103 to 123 (FPLV…IGHI), 129 to 149 (ILAF…VVGL), and 181 to 201 (FAAI…YLFM).

This sequence belongs to the PMP-22/EMP/MP20 family. CACNG subfamily. As to quaternary structure, the L-type calcium channel is composed of five subunits: alpha-1, alpha-2/delta, beta and gamma. Acts as an auxiliary subunit for AMPA-selective glutamate receptors (AMPARs). Found in a complex with GRIA1, GRIA2, GRIA3, GRIA4, CNIH2, CNIH3, CACNG2, CACNG3, CACNG4, CACNG7 and CACNG8. Interacts with GRIA1, GRIA2, GRIA3 and GRIA4.

It localises to the membrane. Its subcellular location is the postsynaptic density membrane. Its function is as follows. Regulates the gating properties of AMPA-selective glutamate receptors (AMPARs). Modulates their gating properties by accelerating their rates of activation, deactivation and desensitization. Displays subunit-specific AMPA receptor regulation. Shows specificity for GRIA1, GRIA4 and the long isoform of GRIA2. According to PubMed:18817736, shows only specificity for GRIA2 and specifically to the form of GRIA2 for which a single amino acid in the pore region has been edited from a glutamine to an arginine residue. Thought to stabilize the calcium channel in an inactivated (closed) state. The polypeptide is Voltage-dependent calcium channel gamma-5 subunit (Cacng5) (Rattus norvegicus (Rat)).